The sequence spans 344 residues: MLQALLDSKDFLALTLANPETLGDEFSFTLGEHTRVEVWDTGVIVFEPVQAQGKDVILSCGVHGNETAPIELCNTLIKQLLQQKIIAKQRTLFLIGNPLAINNGTRIIDENMNRLFSGEHSNPPGLVNPERVRAKKLEAYVDRFFKGAAAGRQRIHYDLHTAMRASKHEKFAIYPYRPGRAYSAEQIMFLAASGVDTVLFHHEPTTTFSYFSSEQYGADAFTIELGKVYPMGQNDMTRFIAAQEMFMRLITDKPLALEPFSADKVNLYQVCRVINKHFDDFEFTFATDVENFRSFPKGFVLAREGGQEIKVEQECESIVFPNAKVPIGNRTVICLIPSVAPDVR.

Residues histidine 63, glutamate 66, and histidine 160 each contribute to the Zn(2+) site. Glutamate 224 is an active-site residue.

It belongs to the AspA/AstE family. Succinylglutamate desuccinylase subfamily. It depends on Zn(2+) as a cofactor.

The enzyme catalyses N-succinyl-L-glutamate + H2O = L-glutamate + succinate. The protein operates within amino-acid degradation; L-arginine degradation via AST pathway; L-glutamate and succinate from L-arginine: step 5/5. In terms of biological role, transforms N(2)-succinylglutamate into succinate and glutamate. The chain is Succinylglutamate desuccinylase from Shewanella sp. (strain MR-4).